Reading from the N-terminus, the 685-residue chain is Polyphosphate kinase (685 aa).

Residue asparagine 45 participates in ATP binding. 2 residues coordinate Mg(2+): arginine 375 and arginine 405. Residue histidine 435 is the Phosphohistidine intermediate of the active site. Positions 468, 564, and 592 each coordinate ATP.

This sequence belongs to the polyphosphate kinase 1 (PPK1) family. The cofactor is Mg(2+). Post-translationally, an intermediate of this reaction is the autophosphorylated ppk in which a phosphate is covalently linked to a histidine residue through a N-P bond.

It carries out the reaction [phosphate](n) + ATP = [phosphate](n+1) + ADP. Functionally, catalyzes the reversible transfer of the terminal phosphate of ATP to form a long-chain polyphosphate (polyP). The polypeptide is Polyphosphate kinase (Neisseria meningitidis serogroup A / serotype 4A (strain DSM 15465 / Z2491)).